A 452-amino-acid chain; its full sequence is GATA-binding factor 2 (452 aa).

A disordered region spans residues 130 to 182 (GGSLYPGTGSSACPSSSHSSPHLFGFPPTPPKDVSPDPGPASPPSSSRLEDKD). Residues 139-151 (SSACPSSSHSSPH) are compositionally biased toward low complexity. Residues 156–172 (PPTPPKDVSPDPGPASP) are compositionally biased toward pro residues. 2 GATA-type zinc fingers span residues 267 to 291 (CVNC…CNAC) and 321 to 345 (CANC…CNAC). Positions 426-438 (QTPTPIHPSSSLS) are enriched in polar residues. Residues 426–452 (QTPTPIHPSSSLSFGHPHHSSMVTAMG) are disordered.

Expressed in the developing ventral blood island, and in the embryonic nervous system.

The protein resides in the nucleus. The polypeptide is GATA-binding factor 2 (gata2) (Xenopus laevis (African clawed frog)).